The following is a 245-amino-acid chain: 1-(5-phosphoribosyl)-5-[(5-phosphoribosylamino)methylideneamino] imidazole-4-carboxamide isomerase (245 aa).

Catalysis depends on aspartate 7, which acts as the Proton acceptor. The active-site Proton donor is aspartate 129.

The protein belongs to the HisA/HisF family.

It localises to the cytoplasm. It carries out the reaction 1-(5-phospho-beta-D-ribosyl)-5-[(5-phospho-beta-D-ribosylamino)methylideneamino]imidazole-4-carboxamide = 5-[(5-phospho-1-deoxy-D-ribulos-1-ylimino)methylamino]-1-(5-phospho-beta-D-ribosyl)imidazole-4-carboxamide. Its pathway is amino-acid biosynthesis; L-histidine biosynthesis; L-histidine from 5-phospho-alpha-D-ribose 1-diphosphate: step 4/9. The chain is 1-(5-phosphoribosyl)-5-[(5-phosphoribosylamino)methylideneamino] imidazole-4-carboxamide isomerase from Pectobacterium carotovorum subsp. carotovorum (strain PC1).